The primary structure comprises 266 residues: MVVILAIVEGITEFLPISSTGHMILVNKLIGGEYLSPTFRNSFLIIIQLGAIFSVVVYFWKDISPFVKTKKEFVLKFRLWLKIIVGVLPAMVIGLLLDDIIDKYFLDNVLIVAITLIAYGVIFIGIEVVYKLKNIKPKVKRFAGLKYRTAFLIGFFQCLAMIPGTSRSGATIIGALLLGLSRPLAAEFSFYLAIPTMFGATALKLFKNGLAFTEMEWSYLALGSAIAFVVAYIVIKWFMDFIKKRSFASFGLYRIILGIIVIVLLY.

8 consecutive transmembrane segments (helical) span residues 1–21, 43–63, 81–101, 109–129, 159–179, 183–203, 219–239, and 246–266; these read MVVI…SSTG, FLII…WKDI, LKII…DDII, VLIV…IEVV, LAMI…LLLG, PLAA…ATAL, YLAL…KWFM, and SFAS…VLLY.

The protein belongs to the UppP family.

The protein localises to the cell inner membrane. It carries out the reaction di-trans,octa-cis-undecaprenyl diphosphate + H2O = di-trans,octa-cis-undecaprenyl phosphate + phosphate + H(+). Catalyzes the dephosphorylation of undecaprenyl diphosphate (UPP). Confers resistance to bacitracin. The sequence is that of Undecaprenyl-diphosphatase from Fusobacterium nucleatum subsp. nucleatum (strain ATCC 25586 / DSM 15643 / BCRC 10681 / CIP 101130 / JCM 8532 / KCTC 2640 / LMG 13131 / VPI 4355).